The chain runs to 418 residues: Gamma-glutamyl phosphate reductase (418 aa).

It belongs to the gamma-glutamyl phosphate reductase family.

Its subcellular location is the cytoplasm. It catalyses the reaction L-glutamate 5-semialdehyde + phosphate + NADP(+) = L-glutamyl 5-phosphate + NADPH + H(+). It functions in the pathway amino-acid biosynthesis; L-proline biosynthesis; L-glutamate 5-semialdehyde from L-glutamate: step 2/2. Functionally, catalyzes the NADPH-dependent reduction of L-glutamate 5-phosphate into L-glutamate 5-semialdehyde and phosphate. The product spontaneously undergoes cyclization to form 1-pyrroline-5-carboxylate. The protein is Gamma-glutamyl phosphate reductase of Pelobacter propionicus (strain DSM 2379 / NBRC 103807 / OttBd1).